Here is an 887-residue protein sequence, read N- to C-terminus: PAN2-PAN3 deadenylation complex subunit Pan3 (887 aa).

The C3H1-type zinc-finger motif lies at 49–77 (GVKLKYCRYYAKDKTCFYGEECQFLHEDP). Disordered regions lie at residues 111–139 (GGGA…GLDG), 280–307 (ENNL…SNVS), and 321–393 (PSMG…GQVI). Residues 147-498 (MDGGALTDAS…PPPNRIQKSS (352 aa)) form a necessary and sufficient for interaction with PABPC1 but not needed for interaction with PAN2 region. 2 stretches are compositionally biased toward polar residues: residues 281–290 (NNLQTPNPTA) and 298–307 (GSTSRLSNVS). Positions 284 to 299 (QTPNPTASEFIPKGGS) match the PABPC-interacting motif-2 (PAM-2) motif. Phosphoserine is present on residues S354 and S361. The tract at residues 463-750 (QIDQADMPAV…SVNDIMPMIG (288 aa)) is pseudokinase domain. ATP-binding positions include R521, 570–577 (DFHAGGET), and 644–645 (TK). Positions 789–887 (TINERPEFQK…ELIAAANGQL (99 aa)) are knob domain.

It belongs to the protein kinase superfamily. PAN3 family. As to quaternary structure, homodimer. Forms a heterotrimer with a catalytic subunit PAN2 to form the poly(A)-nuclease (PAN) deadenylation complex. Interacts (via PAM-2 motif) with poly(A)-binding protein PABPC1 (via PABC domain), conferring substrate specificity of the enzyme complex. Interacts with the GW182 family proteins TNRC6A, TNRC6B and TNRC6C. Interacts with YTHDF3. In terms of assembly, interacts with PAN2. Interacts (via N-terminus) with PABPC1 at lower efficiency than isoform 3. Interacts with PAN2. Interacts (via N-terminus) with PABPC1 at higher efficiency than isoform 1.

Its subcellular location is the cytoplasm. It localises to the P-body. It is found in the nucleus. Regulatory subunit of the poly(A)-nuclease (PAN) deadenylation complex, one of two cytoplasmic mRNA deadenylases involved in general and miRNA-mediated mRNA turnover. PAN specifically shortens poly(A) tails of RNA and the activity is stimulated by poly(A)-binding protein (PABP). PAN deadenylation is followed by rapid degradation of the shortened mRNA tails by the CCR4-NOT complex. Deadenylated mRNAs are then degraded by two alternative mechanisms, namely exosome-mediated 3'-5' exonucleolytic degradation, or deadenylation-dependent mRNA decapping and subsequent 5'-3' exonucleolytic degradation by XRN1. PAN3 acts as a regulator for PAN activity, recruiting the catalytic subunit PAN2 to mRNA via its interaction with RNA and PABP, and to miRNA targets via its interaction with GW182 family proteins. Functionally, decreases PAN2-mediated deadenylation, possibly by preventing progression into the second CCR4-NOT mediated stage of biphasic deadenylation. Has a significant effect on mRNA stability, generally stabilizing a subset of the transcriptome. Stabilizes mRNAs degraded by the AU-rich element (ARE)-mediated mRNA decay pathway but promotes degradation of mRNAs by the microRNA-mediated pathway. Its activity influences mRNP remodeling, specifically reducing formation of a subset of P-bodies containing GW220, an isoform of TNRC6A. In terms of biological role, enhances PAN2 deadenylase activity and has an extensive effect on mRNA stability, generally enhancing mRNA decay across the transcriptome by multiple pathways, including the AU-rich element (ARE)-mediated pathway, microRNA-mediated pathway and the nonsense-mediated pathway (NMD). Its activity is required for efficient P-body formation. May be involved in regulating mRNAs of genes involved in cell cycle progression and cell proliferation. This is PAN2-PAN3 deadenylation complex subunit Pan3 from Mus musculus (Mouse).